A 237-amino-acid chain; its full sequence is Ly6/PLAUR domain-containing protein 8 (237 aa).

The first 19 residues, 1–19, serve as a signal peptide directing secretion; the sequence is MKGILVAGITAVLVAAVES. N-linked (GlcNAc...) asparagine glycans are attached at residues N45, N73, N107, N118, N132, N172, N175, and N185. The region spanning 125–176 is the UPAR/Ly6 domain; that stretch reads CPACYESNGTSCHGKPWKCYEEEQCVFLVAELKNDIESKSLVLKGCSNVSNA. A lipid anchor (GPI-anchor amidated asparagine) is attached at N215. Residues 216–237 constitute a propeptide, removed in mature form; sequence VGSKASLYLLALASLLLRGLLP.

This sequence belongs to the CNF-like-inhibitor family. In terms of processing, highly N-glycosylated. Not O-glycosylated. Post-translationally, GPI-anchored. The GPI-anchor is cleaved, leading to secretion into the colonic lumen. In terms of tissue distribution, expressed in the large intestine. Preferentially expressed on the epithelial layer exposed to the lumen (at protein level).

The protein localises to the cell membrane. Its subcellular location is the secreted. Its function is as follows. Secreted protein specifically required to prevent invasion of Gram-negative bacteria in the inner mucus layer of the colon epithelium, a portion of the large intestine which is free of commensal microbiota. Prevents invasion of flagellated microbiota by binding to the flagellum of bacteria, such as P.mirabilis, thereby inhibiting bacterial motility in the intestinal lumen. Segregation of intestinal bacteria and epithelial cells in the colon is required to preserve intestinal homeostasis. The chain is Ly6/PLAUR domain-containing protein 8 from Homo sapiens (Human).